Consider the following 359-residue polypeptide: 3-dehydroquinate synthase (359 aa).

Residues 71 to 76 (DGEAHK), 105 to 109 (GVIGD), 129 to 130 (TT), Lys-142, Lys-151, and 169 to 172 (TLHT) each bind NAD(+). Residues Glu-184, His-247, and His-264 each contribute to the Zn(2+) site.

It belongs to the sugar phosphate cyclases superfamily. Dehydroquinate synthase family. The cofactor is Co(2+). Zn(2+) is required as a cofactor. It depends on NAD(+) as a cofactor.

The protein localises to the cytoplasm. It carries out the reaction 7-phospho-2-dehydro-3-deoxy-D-arabino-heptonate = 3-dehydroquinate + phosphate. Its pathway is metabolic intermediate biosynthesis; chorismate biosynthesis; chorismate from D-erythrose 4-phosphate and phosphoenolpyruvate: step 2/7. Functionally, catalyzes the conversion of 3-deoxy-D-arabino-heptulosonate 7-phosphate (DAHP) to dehydroquinate (DHQ). This is 3-dehydroquinate synthase from Neisseria meningitidis serogroup C (strain 053442).